A 249-amino-acid polypeptide reads, in one-letter code: Probable septum site-determining protein MinC (249 aa).

A disordered region spans residues 89–130; the sequence is SLFEPGMPPAMKGGRPAPDFEVPEVDPADPPKAGKGKAAAPI. Residues 119-129 show a composition bias toward low complexity; the sequence is PKAGKGKAAAP.

The protein belongs to the MinC family. Interacts with MinD and FtsZ.

Functionally, cell division inhibitor that blocks the formation of polar Z ring septums. Rapidly oscillates between the poles of the cell to destabilize FtsZ filaments that have formed before they mature into polar Z rings. Prevents FtsZ polymerization. This Rhizobium meliloti (strain 1021) (Ensifer meliloti) protein is Probable septum site-determining protein MinC.